The chain runs to 401 residues: Mu-type opioid receptor (401 aa).

The Extracellular portion of the chain corresponds to 1–69 (MDSSAVPANA…CPPTGSPSMI (69 aa)). N-linked (GlcNAc...) asparagine glycosylation is found at Asn9, Asn12, Asn34, Asn41, and Asn49. A helical membrane pass occupies residues 70-94 (TAITIMALYSIVCVVGLFGNFLVMY). The Cytoplasmic portion of the chain corresponds to 95–107 (VIVRYTKMKTATN). Residues 108 to 132 (IYIFNLALADALATSTLPFQSVNYL) traverse the membrane as a helical segment. The Extracellular segment spans residues 133–143 (MGTWPFGTILC). The cysteines at positions 143 and 220 are disulfide-linked. The chain crosses the membrane as a helical span at residues 144–166 (KIVISIDYYNMFTSIFTLCTMSV). The Cytoplasmic segment spans residues 167–186 (DRYIAVCHPVKALDFRTPRN). Tyr169 is modified (phosphotyrosine). A helical membrane pass occupies residues 187–208 (AKIINVCNWILSSAIGLPVMFM). Residues 209 to 231 (ATTKYRHGSIDCTLTFSHPTWYW) lie on the Extracellular side of the membrane. A helical membrane pass occupies residues 232 to 256 (ENLLKICVFIFAFIMPVLIITVCYG). Residues 257–280 (LMILRLKSVRMLSGSKEKDRNLRR) are Cytoplasmic-facing. Residues 281–307 (ITRMVLVVVAVFIVCWTPIHIYVIIKA) form a helical membrane-spanning segment. Topologically, residues 308 to 315 (LVTIPETT) are extracellular. The helical transmembrane segment at 316 to 339 (FQTVSWHFCIALGYTNSCLNPVLY) threads the bilayer. The NPxxY; plays a role in stabilizing the activated conformation of the receptor motif lies at 335 to 339 (NPVLY). Over 340-401 (AFLDENFKRC…NLEAETAPLP (62 aa)) the chain is Cytoplasmic. Cys354 carries S-palmitoyl cysteine lipidation. The interval 365–388 (NSTRIRQNTRDHPSTANTVDRTNH) is disordered. Ser366 is subject to Phosphoserine. Thr373 bears the Phosphothreonine mark. A Phosphoserine modification is found at Ser378. The residue at position 397 (Thr397) is a Phosphothreonine.

Belongs to the G-protein coupled receptor 1 family. Forms homooligomers and heterooligomers with other GPCRs, such as OPRD1, OPRK1, OPRL1, NPFFR2, ADRA2A, SSTR2, CNR1 and CCR5 (probably in dimeric forms). Interacts with heterotrimeric G proteins; interaction with a heterotrimeric complex containing GNAI1, GNB1 and GNG2 stabilizes the active conformation of the receptor and increases its affinity for endomorphin-2, the synthetic opioid peptide DAMGO and for morphinan agonists. Interacts with PPL; the interaction disrupts agonist-mediated G-protein activation. Interacts (via C-terminus) with DNAJB4 (via C-terminus). Interacts with calmodulin; the interaction inhibits the constitutive activity of OPRM1; it abolishes basal and attenuates agonist-stimulated G-protein coupling. Interacts with FLNA, PLD2, RANBP9 and WLS and GPM6A. Interacts with RTP4. Interacts with SYP and GNAS. Interacts with RGS9, RGS17, RGS20, RGS4, PPP1R9B and HINT1. In terms of processing, phosphorylated. Differentially phosphorylated in basal and agonist-induced conditions. Agonist-mediated phosphorylation modulates receptor internalization. Phosphorylated by GRK2 in a agonist-dependent manner. Phosphorylation at Tyr-169 requires receptor activation, is dependent on non-receptor protein tyrosine kinase Src and results in a decrease in agonist efficacy by reducing G-protein coupling efficiency. Phosphorylated on tyrosine residues; the phosphorylation is involved in agonist-induced G-protein-independent receptor down-regulation. Phosphorylation at Ser-378 is involved in G-protein-dependent but not beta-arrestin-dependent activation of the ERK pathway. Ubiquitinated. A basal ubiquitination seems not to be related to degradation. Ubiquitination is increased upon formation of OPRM1:OPRD1 oligomers leading to proteasomal degradation; the ubiquitination is diminished by RTP4.

It localises to the cell membrane. The protein resides in the cell projection. It is found in the axon. Its subcellular location is the perikaryon. The protein localises to the dendrite. It localises to the endosome. In terms of biological role, receptor for endogenous opioids such as beta-endorphin and endomorphin. Receptor for natural and synthetic opioids including morphine, heroin, DAMGO, fentanyl, etorphine, buprenorphin and methadone. Also activated by enkephalin peptides, such as Met-enkephalin or Met-enkephalin-Arg-Phe, with higher affinity for Met-enkephalin-Arg-Phe. Agonist binding to the receptor induces coupling to an inactive GDP-bound heterotrimeric G-protein complex and subsequent exchange of GDP for GTP in the G-protein alpha subunit leading to dissociation of the G-protein complex with the free GTP-bound G-protein alpha and the G-protein beta-gamma dimer activating downstream cellular effectors. The agonist- and cell type-specific activity is predominantly coupled to pertussis toxin-sensitive G(i) and G(o) G alpha proteins, GNAI1, GNAI2, GNAI3 and GNAO1, and to a lesser extent to pertussis toxin-insensitive G alpha proteins GNAZ and GNA15. They mediate an array of downstream cellular responses, including inhibition of adenylate cyclase activity and both N-type and L-type calcium channels, activation of inward rectifying potassium channels, mitogen-activated protein kinase (MAPK), phospholipase C (PLC), phosphoinositide/protein kinase (PKC), phosphoinositide 3-kinase (PI3K) and regulation of NF-kappa-B. Also couples to adenylate cyclase stimulatory G alpha proteins. The selective temporal coupling to G-proteins and subsequent signaling can be regulated by RGSZ proteins, such as RGS9, RGS17 and RGS4. Phosphorylation by members of the GPRK subfamily of Ser/Thr protein kinases and association with beta-arrestins is involved in short-term receptor desensitization. Beta-arrestins associate with the GPRK-phosphorylated receptor and uncouple it from the G-protein thus terminating signal transduction. The phosphorylated receptor is internalized through endocytosis via clathrin-coated pits which involves beta-arrestins. The activation of the ERK pathway occurs either in a G-protein-dependent or a beta-arrestin-dependent manner and is regulated by agonist-specific receptor phosphorylation. Acts as a class A G-protein coupled receptor (GPCR) which dissociates from beta-arrestin at or near the plasma membrane and undergoes rapid recycling. Receptor down-regulation pathways are varying with the agonist and occur dependent or independent of G-protein coupling. Endogenous ligands induce rapid desensitization, endocytosis and recycling. Heterooligomerization with other GPCRs can modulate agonist binding, signaling and trafficking properties. Involved in neurogenesis. The sequence is that of Mu-type opioid receptor (OPRM1) from Pan troglodytes (Chimpanzee).